The chain runs to 1277 residues: Clustered mitochondria protein 1 (1277 aa).

Disordered stretches follow at residues 19–39 (LPKEDNHSHNTKHLKKTQSSK) and 148–176 (LPLGPIKERSKQEEKDEKSDPEEKKNTFK). The span at 27–36 (HNTKHLKKTQ) shows a compositional bias: basic residues. Over residues 153 to 176 (IKERSKQEEKDEKSDPEEKKNTFK) the composition is skewed to basic and acidic residues. The Clu domain occupies 339–596 (PPNNPDYLRL…NTYPLDINFA (258 aa)). TPR repeat units lie at residues 704–738 (GINMRYLGKIIELSQKELDSQIVHYEQNLKAVEQD), 1020–1053 (AEKYLSLSAIYNKLALYPEAIAFCRKACTIYERV), and 1148–1181 (GYTESRLGNLFAALKDFHRALEHITVTQGIFTKQ). The tract at residues 1212 to 1277 (LAQDQMSTTG…TNNKKKHGKK (66 aa)) is disordered. Residues 1235–1249 (KKDDVKPELANKSVD) show a composition bias toward basic and acidic residues. Ser-1247 is subject to Phosphoserine. The segment covering 1264 to 1277 (SKNKTNNKKKHGKK) has biased composition (basic residues).

Belongs to the CLU family. May associate with the eukaryotic translation initiation factor 3 (eIF-3) complex. Associates with the 80S ribosome.

It localises to the cytoplasm. Its function is as follows. mRNA-binding protein involved in proper cytoplasmic distribution of mitochondria. The polypeptide is Clustered mitochondria protein 1 (Saccharomyces cerevisiae (strain ATCC 204508 / S288c) (Baker's yeast)).